Here is a 195-residue protein sequence, read N- to C-terminus: Mannitol operon repressor (195 aa).

The protein belongs to the MtlR/FumE family. As to quaternary structure, homodimer. Can also form higher level multimer aggregates.

Involved in the repression of the expression of the mannitol mtlADR operon. Does not bind the operator/promoter regulatory region of this operon. Therefore, seems to belong to a new class of transcription factors in bacteria that may regulate gene expression indirectly, perhaps as a part of a larger transcriptional complex. This Escherichia coli O6:H1 (strain CFT073 / ATCC 700928 / UPEC) protein is Mannitol operon repressor.